Here is a 180-residue protein sequence, read N- to C-terminus: Ribosome rescue factor SmrB (180 aa).

The region spanning 98-173 (LDLHGLTQLI…GDAALLLLVE (76 aa)) is the Smr domain.

The protein belongs to the SmrB family. In terms of assembly, associates with collided ribosomes, but not with correctly translating polysomes.

In terms of biological role, acts as a ribosome collision sensor. Detects stalled/collided disomes (pairs of ribosomes where the leading ribosome is stalled and a second ribosome has collided with it) and endonucleolytically cleaves mRNA at the 5' boundary of the stalled ribosome. Stalled/collided disomes form a new interface (primarily via the 30S subunits) that binds SmrB. Cleaved mRNA becomes available for tmRNA ligation, leading to ribosomal subunit dissociation and rescue of stalled ribosomes. The protein is Ribosome rescue factor SmrB of Proteus mirabilis (strain HI4320).